The chain runs to 402 residues: B3 domain-containing protein LFL1 (402 aa).

The disordered stretch occupies residues 1–174 (MRGEERWQEQ…AAPRPSSHHT (174 aa)). Residues 74–87 (ARPPTLAASAAAAS) show a composition bias toward low complexity. Residues 88–102 (SPPPPPPPPIPPLPP) show a composition bias toward pro residues. Composition is skewed to low complexity over residues 103-139 (STSTSAARPTDMAGVTSKRRSSSASTSSSSGDGAAVS) and 156-169 (PRPAASLRPAAPRP). Positions 181 to 284 (LQKELRYSDV…RFVIGAKKAG (104 aa)) form a DNA-binding region, TF-B3. Positions 381–402 (LHVTDDKSGHSLIPNPKSGPHM) are disordered.

Expressed in anthers, pollen grains and young developing embryos.

The protein localises to the nucleus. Its function is as follows. Transcription repressor involved in flowering time regulation. Represses the flowering activator EHD1 by binding specifically to the DNA sequence 5'-CATGCATG-3 of its promoter. This Oryza sativa subsp. japonica (Rice) protein is B3 domain-containing protein LFL1 (LFL1).